The primary structure comprises 133 residues: Fatty acid-binding protein, heart (133 aa).

Residue V2 is modified to N-acetylvaline. T8 carries the post-translational modification Phosphothreonine. A Phosphotyrosine; by Tyr-kinases modification is found at Y20. Phosphoserine is present on S23. T30 is modified (phosphothreonine). At S83 the chain carries Phosphoserine. 127–129 (RTY) serves as a coordination point for (9Z)-octadecenoate. Residue 127–129 (RTY) participates in hexadecanoate binding. 127-129 (RTY) contacts octadecanoate.

This sequence belongs to the calycin superfamily. Fatty-acid binding protein (FABP) family.

The protein localises to the cytoplasm. Its function is as follows. FABPs are thought to play a role in the intracellular transport of long-chain fatty acids and their acyl-CoA esters. The chain is Fatty acid-binding protein, heart (FABP3) from Homo sapiens (Human).